A 740-amino-acid chain; its full sequence is Gramillins biosynthetic cluster protein FGSG_11657 (740 aa).

Disordered stretches follow at residues 353 to 391, 414 to 434, 514 to 535, and 656 to 686; these read QADS…SSIP, SKLS…DAAS, PKEQ…GSSD, and EHEG…PQGD. A compositionally biased stretch (basic and acidic residues) spans 656-667; that stretch reads EHEGEGRADTNR. Residues 668-682 are compositionally biased toward polar residues; that stretch reads HVSTQSNMPTEQSLL.

It participates in mycotoxin biosynthesis. Its function is as follows. Part of the gene cluster that mediates the biosynthesis of gramillins A and B, bicyclic lipopeptides that induce cell death in maize leaves but not in wheat leaves. The nonribosomal peptide synthetase GRA1 incorporates respectively a glutamic adic (Glu), a leucine (Leu), a serine (Ser), a hydroxyglutamine (HOGln), a 2-amino decanoic acid, and 2 cysteins (CysB and CysA). The biosynthesis of 2-amino decanoic acid incorporated in gramillins could be initiated by a fatty acid synthase composed of the alpha and beta subunits FGSG_00036 and FGSG_11656. The cytochrome P450 monooxygenase FGSG_15680 could hydroxylate the fatty acid chain. Subsequent oxidation to the ketone by the oxidoreductase FGSG_00048 and transamination by aminotransferase FGSG_00049 could form 2-amino-decanoic acid. On the other hand, FGSG_15680 could also be responsible for the HO-modified glutamine at the gamma-position. Whether hydroxylation occurs on the fully assembled product or on the Gln residue prior to assembly into the gramillins requires further proof. The thioredoxin FGSG_00043 could also be required for the disulfide-bond formation between CysA and CysB. The specific involvement of the remaining proteins from the cluster is more difficult to discern, but could have broader regulatory (FGSG_00040 and FGSG_11657) or enzymatic functions (FGSG_00044 and FGSG_00045). The final C-domain of GRA1 does not possess the expected sequence of a termination CT domain, often implicated in macrocyclization and release of a cyclopeptidein fungal NRPs; and the thioesterase FGSG_00047 may act in concert with the terminal C-domain of GRA1 to catalyze the formation of the macrocyclic anhydride and release of the products. This Gibberella zeae (strain ATCC MYA-4620 / CBS 123657 / FGSC 9075 / NRRL 31084 / PH-1) (Wheat head blight fungus) protein is Gramillins biosynthetic cluster protein FGSG_11657.